A 526-amino-acid polypeptide reads, in one-letter code: Peptide chain release factor 3 (526 aa).

The region spanning 9–277 (DKRRTFAIIS…GIVEWAPIPQ (269 aa)) is the tr-type G domain. GTP is bound by residues 18 to 25 (SHPDAGKT), 86 to 90 (DTPGH), and 140 to 143 (NKLD).

It belongs to the TRAFAC class translation factor GTPase superfamily. Classic translation factor GTPase family. PrfC subfamily.

Its subcellular location is the cytoplasm. Functionally, increases the formation of ribosomal termination complexes and stimulates activities of RF-1 and RF-2. It binds guanine nucleotides and has strong preference for UGA stop codons. It may interact directly with the ribosome. The stimulation of RF-1 and RF-2 is significantly reduced by GTP and GDP, but not by GMP. This is Peptide chain release factor 3 from Shewanella halifaxensis (strain HAW-EB4).